A 738-amino-acid polypeptide reads, in one-letter code: Adhesion G protein-coupled receptor L4 (738 aa).

Positions 1–19 are cleaved as a signal peptide; it reads MRLLLLLVGLSTLLNHSYT. Positions 20 to 56 constitute an EGF-like 1 domain; that stretch reads QNCKTPCLPNAKCEVLDEVAACFCSTGYTGNGITICE. Over 20–480 the chain is Extracellular; sequence QNCKTPCLPN…DYNILTRITQ (461 aa). Cystine bridges form between C22–C32, C26–C41, C43–C55, C61–C73, C67–C82, C84–C105, C111–C123, C117–C132, and C134–C155. Residues 57–106 enclose the EGF-like 2; calcium-binding domain; it reads DVDECNETSVCGDHAVCENTNGGFSCFCVEGYQTSTGKTQFTPNDGSYCQ. A glycan (N-linked (GlcNAc...) asparagine) is linked at N62. Residues 107 to 156 enclose the EGF-like 3; calcium-binding domain; sequence DVDECNETSVCGDHAVCENTNGGFSCFCVEGYQTSTGKTQFTPNDGSYCQ. N112 carries an N-linked (GlcNAc...) asparagine glycan. 6 N-linked (GlcNAc...) asparagine glycosylation sites follow: N175, N226, N297, N421, N429, and N443. Residues 292–467 form the GAIN-B domain; the sequence is TQFDMNSTDL…AILMSPSTSI (176 aa). 2 cysteine pairs are disulfide-bonded: C417/C449 and C437/C451. The tract at residues 417–467 is GPS; sequence CAFWNYSVDDMNNGSWSSEGCELTYSNDTHTSCRCSHLTHFAILMSPSTSI. A helical transmembrane segment spans residues 481-501; sequence LGIIISLICLAICIFTFWFFS. Residues 502 to 522 lie on the Cytoplasmic side of the membrane; that stretch reads EIQSTRTTIHKNLCCSLFLAQ. Residues 523–543 traverse the membrane as a helical segment; sequence LVFLVGININTNKLVCSIIAG. The Extracellular segment spans residues 544 to 547; it reads LLHY. Residues 548-568 form a helical membrane-spanning segment; it reads FFLAAFAWMCIEGIYLYLIVV. The Cytoplasmic segment spans residues 569 to 580; sequence GLIYNKGFLHKN. The chain crosses the membrane as a helical span at residues 581-601; the sequence is FYIFGYLSPAVVVGFSASLGY. Residues 602–621 lie on the Extracellular side of the membrane; the sequence is RYYGTTKVCWLSTENNFIWS. Residues 622–642 form a helical membrane-spanning segment; sequence FIGPACLIILVNLLAFGVIIY. Residues 643–666 lie on the Cytoplasmic side of the membrane; sequence KVFRHTAGLKPEVSCYENIRSCAR. The chain crosses the membrane as a helical span at residues 667 to 687; the sequence is GALALLFLLGTTWTFGVLHVV. Residues 688–694 lie on the Extracellular side of the membrane; sequence HASVVTA. The chain crosses the membrane as a helical span at residues 695–715; it reads YLFTVSNAFQGMFIFLFLCVL. Over 716-738 the chain is Cytoplasmic; sequence SRKIQEEYYRLFKNVPCCFECLR.

Belongs to the G-protein coupled receptor 2 family. Adhesion G-protein coupled receptor (ADGR) subfamily. In terms of assembly, heterodimer of 2 chains generated by proteolytic processing; the large extracellular N-terminal fragment and the membrane-bound C-terminal fragment predominantly remain associated and non-covalently linked. Proteolytically cleaved into 2 subunits, an extracellular alpha subunit and a seven-transmembrane subunit. In terms of processing, glycosylated. Abundantly expressed in heart, lung, and kidney. Less evident expression is observed in brain, skeletal muscle, liver and spleen. No expression is detected in testis.

Its subcellular location is the cell membrane. In terms of biological role, endothelial orphan receptor that acts as a key regulator of angiogenesis. In Rattus norvegicus (Rat), this protein is Adhesion G protein-coupled receptor L4 (Adgrl4).